We begin with the raw amino-acid sequence, 926 residues long: DNA mismatch repair protein MutS (926 aa).

The interval 1-60 (MAASQNPIQGSLFGGNEESDLNKAEKLKGSERSNVNLSHQQLKEDASLRPRIKQTPKNPN) is disordered. Residues 20 to 31 (DLNKAEKLKGSE) show a composition bias toward basic and acidic residues. 726 to 733 (GPNASGKS) contributes to the ATP binding site.

Belongs to the DNA mismatch repair MutS family.

Functionally, this protein is involved in the repair of mismatches in DNA. It is possible that it carries out the mismatch recognition step. This protein has a weak ATPase activity. The sequence is that of DNA mismatch repair protein MutS from Prochlorococcus marinus (strain NATL2A).